We begin with the raw amino-acid sequence, 338 residues long: High mobility group B protein 9 (338 aa).

One can recognise an ARID domain in the interval Val38 to Leu129. The interval Thr233–Arg259 is disordered. Positions Arg235–Arg247 are enriched in basic residues. Residues Pro255–Arg322 constitute a DNA-binding region (HMG box).

As to expression, predominantly expressed in leaves, flowers and seedlings.

The protein localises to the nucleus. Binds preferentially DNA with A/T-rich content. Required for karyogamy during female gametophyte development, when the two polar nuclei fuse to form the diploid central cell nucleus. This is High mobility group B protein 9 (HMGB9) from Arabidopsis thaliana (Mouse-ear cress).